The primary structure comprises 625 residues: DNA-directed RNA polymerase subunit gamma (625 aa).

The Zn(2+) site is built by Cys-71, Cys-73, Cys-86, and Cys-89. Asp-467, Asp-469, and Asp-471 together coordinate Mg(2+).

The protein belongs to the RNA polymerase beta' chain family. RpoC1 subfamily. In cyanobacteria the RNAP catalytic core is composed of 2 alpha, 1 beta, 1 beta', 1 gamma and 1 omega subunit. When a sigma factor is associated with the core the holoenzyme is formed, which can initiate transcription. The cofactor is Mg(2+). Requires Zn(2+) as cofactor.

It catalyses the reaction RNA(n) + a ribonucleoside 5'-triphosphate = RNA(n+1) + diphosphate. DNA-dependent RNA polymerase catalyzes the transcription of DNA into RNA using the four ribonucleoside triphosphates as substrates. This is DNA-directed RNA polymerase subunit gamma from Trichormus variabilis (strain ATCC 29413 / PCC 7937) (Anabaena variabilis).